Here is a 345-residue protein sequence, read N- to C-terminus: MNLAVIFGGASYEHEISIVSAISLKKILPALEHFIFVDGNRDFYWIPASEMRSKHFADGIYKKNPKLFLRPGGFYAKGLWGEKRVPFDTALNLIHGGDGEDGKLASLLEFFRIPFIGPRIEASVMSFNKHLTKLYAKERGVKTLPYLLARKNEKREFGNEFPLIVKPLRLGSSIGVSIAKNRQELDYALDVAFEFDEAALLEPFMQGIKEYNLAGCKINGEYHFSIIEEPQKKEFLDFDKKYLDFSRTQKLLKADLSEASERLLKEAFIKLYDDSFEGSLIRCDFFVQNQEVFLNEINPIPGSLANYLFEDFPKILQSLAHNLPKERGIKIDYRYIHQIQKAKGK.

Residues 133–340 enclose the ATP-grasp domain; sequence KLYAKERGVK…IDYRYIHQIQ (208 aa). 162 to 211 provides a ligand contact to ATP; that stretch reads PLIVKPLRLGSSIGVSIAKNRQELDYALDVAFEFDEAALLEPFMQGIKEY. 3 residues coordinate Mg(2+): aspartate 284, glutamate 296, and asparagine 298.

Belongs to the D-alanine--D-alanine ligase family. It depends on Mg(2+) as a cofactor. Requires Mn(2+) as cofactor.

The protein resides in the cytoplasm. It catalyses the reaction 2 D-alanine + ATP = D-alanyl-D-alanine + ADP + phosphate + H(+). It participates in cell wall biogenesis; peptidoglycan biosynthesis. Functionally, cell wall formation. The chain is D-alanine--D-alanine ligase from Wolinella succinogenes (strain ATCC 29543 / DSM 1740 / CCUG 13145 / JCM 31913 / LMG 7466 / NCTC 11488 / FDC 602W) (Vibrio succinogenes).